The following is a 302-amino-acid chain: N-acetylaspartate synthetase (302 aa).

The span at 46–60 (PGPAAAPPAPPPAPV) shows a compositional bias: pro residues. The tract at residues 46–72 (PGPAAAPPAPPPAPVAQPHGGAGGAGP) is disordered. Residues 121 to 141 (YALLAALCFAVSRSLLLTCLV) traverse the membrane as a helical segment. The region spanning 143-283 (AALLGLRYYY…VLPGMTLSLA (141 aa)) is the N-acetyltransferase domain.

It belongs to the NAT8 family. In terms of tissue distribution, expressed in brain.

The protein localises to the cytoplasm. It localises to the microsome membrane. Its subcellular location is the mitochondrion membrane. It is found in the endoplasmic reticulum membrane. The catalysed reaction is L-aspartate + acetyl-CoA = N-acetyl-L-aspartate + CoA + H(+). Aminooxyacetic acid (AOAA) blocks its activity in both cytoplasm and mitochondria. Its function is as follows. Catalyzes the synthesis of N-acetylaspartate acid (NAA) from L-aspartate and acetyl-CoA. Promotes dopamine uptake by regulating TNF-alpha expression. Attenuates methamphetamine-induced inhibition of dopamine uptake. The protein is N-acetylaspartate synthetase of Homo sapiens (Human).